The sequence spans 184 residues: UPF0215 protein MJ1150 (184 aa).

It belongs to the UPF0215 family.

In Methanocaldococcus jannaschii (strain ATCC 43067 / DSM 2661 / JAL-1 / JCM 10045 / NBRC 100440) (Methanococcus jannaschii), this protein is UPF0215 protein MJ1150.